The sequence spans 429 residues: Proton/sodium-glutamate symport protein (429 aa).

The Cytoplasmic segment spans residues M1–K5. The helical transmembrane segment at F6–W26 threads the bilayer. Residues Y27–R45 are Extracellular-facing. Residues L46–A66 form a helical membrane-spanning segment. Residues G67–T79 lie on the Cytoplasmic side of the membrane. A helical transmembrane segment spans residues I80–I100. Over F101 to E150 the chain is Extracellular. A helical transmembrane segment spans residues G151–G171. Residues E172–H190 are Cytoplasmic-facing. The chain crosses the membrane as a helical span at residues V191–V211. Residues S212–K224 are Extracellular-facing. The helical transmembrane segment at L225–A245 threads the bilayer. K246 is a topological domain (cytoplasmic). A helical transmembrane segment spans residues I247–F267. The Extracellular portion of the chain corresponds to S268 to K290. The chain crosses the membrane as a helical span at residues G291–Y311. The Cytoplasmic portion of the chain corresponds to Q312–Q321. A helical transmembrane segment spans residues V322–T342. The Extracellular portion of the chain corresponds to S343–S353. The helical transmembrane segment at F354 to I374 threads the bilayer. Topologically, residues A375–G429 are cytoplasmic.

Belongs to the dicarboxylate/amino acid:cation symporter (DAACS) (TC 2.A.23) family. In terms of assembly, homotrimer. Interacts with FloT.

It is found in the cell membrane. The protein resides in the membrane raft. In terms of biological role, this carrier protein is part of the Na(+)-dependent, binding-protein-independent glutamate-aspartate transport system. The protein is Proton/sodium-glutamate symport protein (gltT) of Bacillus subtilis (strain 168).